A 349-amino-acid polypeptide reads, in one-letter code: MSAKTNAKKKEQDKPQSSGLGLDGLGDLAGLLNEQPAANAGGAGPQELPLDLIDEDPHQPRTADNPGFSPESIAEIGETIKARGVKSPISVRENPDAPGRYLINHGARRYRGSKWAHKTTIPAFIDNDYNEADQVIENLQRNELTAREIADFIGRELAKGKKKGEIAKEIGKSPAFVTQHVTLLDLPEPIAEAFNSGRGKDVTVINELVTAYKKNPDEVAAWLADDSQELTRGSVKLLREFLEDKRSHDDGDRDPNTVDALTGKTDAEAGDGEQGPQDDDAKGKKEPKEADPDKLKKAIIQVKHDDRPARLILNRRPPAEGWAWLKYEDDGQEFEADLGTVQLVALLEG.

Disordered stretches follow at residues 1–72 (MSAK…SPES) and 246–296 (RSHD…DKLK). Positions 25–40 (LGDLAGLLNEQPAANA) are enriched in low complexity. Basic and acidic residues-rich tracts occupy residues 246 to 256 (RSHDDGDRDPN) and 279 to 296 (DDAK…DKLK).

Belongs to the ParB family.

Its function is as follows. In conjunction with KorA, inhibits the transcription of the kilA, trfA and korAB operons. Is also involved in the negative control of the kilB operon. The sequence is that of Transcriptional repressor protein KorB (korB) from Escherichia coli.